The following is a 577-amino-acid chain: DEAD-box ATP-dependent RNA helicase 22 (577 aa).

The Q motif signature appears at 82–110; that stretch reads TSWESLGVSDRLASALHGAGLARPSLVQA. The Helicase ATP-binding domain occupies 113 to 375; the sequence is IPHVLTTNDV…GGVLKRMFPN (263 aa). 126–133 contributes to the ATP binding site; sequence AETGSGKT. The short motif at 249–252 is the DEAD box element; that stretch reads DEAD. The segment at 288-317 is disordered; it reads SLGDTNEYREDSDSQSAELSADDEENEDGL. Residues 407 to 568 enclose the Helicase C-terminal domain; that stretch reads LLDAVKYGLK…SFRNKLKKQA (162 aa).

Belongs to the DEAD box helicase family.

The enzyme catalyses ATP + H2O = ADP + phosphate + H(+). The chain is DEAD-box ATP-dependent RNA helicase 22 from Oryza sativa subsp. japonica (Rice).